Here is a 330-residue protein sequence, read N- to C-terminus: Alpha/beta hydrolase domain-containing protein VTE7 (330 aa).

Residues Val-84 to Lys-315 enclose the AB hydrolase-1 domain. The active-site Nucleophile is Ser-157. Active-site charge relay system residues include Asp-279 and His-307.

This sequence belongs to the AB hydrolase superfamily.

It is found in the plastid. The protein resides in the chloroplast envelope. Hydrolase involved in tocopherol (vitamin E) biosynthesis. Releases prenyl alcohols from chlorophyll biosynthetic intermediates, which are then converted to the corresponding diphosphates for tocopherol biosynthesis. Provides most of the phytol from chlorophyll for tocopherol biosynthesis in seeds. The protein is Alpha/beta hydrolase domain-containing protein VTE7 of Arabidopsis thaliana (Mouse-ear cress).